Reading from the N-terminus, the 244-residue chain is Lymphotoxin-beta (244 aa).

Topologically, residues 1–18 (MGALGLEGRGGRLQGRGS) are cytoplasmic. A helical; Signal-anchor for type II membrane protein membrane pass occupies residues 19–48 (LLLAVAGATSLVTLLLAVPITVLAVLALVP). Residues 49-244 (QDQGGLVTET…KTFFGAVMVG (196 aa)) are Extracellular-facing. The THD domain maps to 88 to 243 (PAAHLIGAPL…GKTFFGAVMV (156 aa)). Asn-222 carries an N-linked (GlcNAc...) asparagine glycan.

The protein belongs to the tumor necrosis factor family. As to quaternary structure, heterotrimer of either two LTB and one LTA subunits or (less prevalent) two LTA and one LTB subunits.

The protein localises to the membrane. Functionally, cytokine that binds to LTBR/TNFRSF3. May play a specific role in immune response regulation. Provides the membrane anchor for the attachment of the heterotrimeric complex to the cell surface. In Pan troglodytes (Chimpanzee), this protein is Lymphotoxin-beta (LTB).